A 281-amino-acid chain; its full sequence is UPF0162 protein PD_0709 (281 aa).

TPR repeat units follow at residues 193-226 (VRIL…VPNQ) and 227-260 (PEAL…YPST).

Belongs to the UPF0162 family.

The sequence is that of UPF0162 protein PD_0709 from Xylella fastidiosa (strain Temecula1 / ATCC 700964).